Reading from the N-terminus, the 176-residue chain is 2-C-methyl-D-erythritol 2,4-cyclodiphosphate synthase (176 aa).

A divalent metal cation-binding residues include Asp22 and His24. 4-CDP-2-C-methyl-D-erythritol 2-phosphate-binding positions include 22-24 and 48-49; these read DVH and HS. His56 provides a ligand contact to a divalent metal cation. Residues 70 to 72, 146 to 149, Phe153, and Arg156 each bind 4-CDP-2-C-methyl-D-erythritol 2-phosphate; these read DIG and TTSE.

Belongs to the IspF family. Homotrimer. Requires a divalent metal cation as cofactor.

The enzyme catalyses 4-CDP-2-C-methyl-D-erythritol 2-phosphate = 2-C-methyl-D-erythritol 2,4-cyclic diphosphate + CMP. It participates in isoprenoid biosynthesis; isopentenyl diphosphate biosynthesis via DXP pathway; isopentenyl diphosphate from 1-deoxy-D-xylulose 5-phosphate: step 4/6. Its function is as follows. Involved in the biosynthesis of isopentenyl diphosphate (IPP) and dimethylallyl diphosphate (DMAPP), two major building blocks of isoprenoid compounds. Catalyzes the conversion of 4-diphosphocytidyl-2-C-methyl-D-erythritol 2-phosphate (CDP-ME2P) to 2-C-methyl-D-erythritol 2,4-cyclodiphosphate (ME-CPP) with a corresponding release of cytidine 5-monophosphate (CMP). In Xylella fastidiosa (strain 9a5c), this protein is 2-C-methyl-D-erythritol 2,4-cyclodiphosphate synthase.